Consider the following 273-residue polypeptide: MHHDPNPFDEGNADDNPFSNGGGGGGGGGSRQQYGFRPTEPAGFGAGRGDATVDVPLDTMGDSKSKARELSSWETDLKRREADIKRREEALRNAGVPMEDKNWPPFFPIIHHDIANEIPANLQKLQYLAFASWLGIVLCLSWNFIAVIVCWIKEGDSKLFFLATIYALLGIPLSYLIWYRPLYRAMRTNSAFSFGWFFLCYLIHIGFCIIAAIAPPIVFHGKSLTGILAAIDTFSEHVIIGIFYFVGFALFCLETLLSIGVLQRVYMYFRGNK.

A disordered region spans residues 1-69 (MHHDPNPFDE…MGDSKSKARE (69 aa)). Residues 1 to 131 (MHHDPNPFDE…LQKLQYLAFA (131 aa)) are Cytoplasmic-facing. The segment covering 20-30 (NGGGGGGGGGS) has biased composition (gly residues). The stretch at 68–94 (RELSSWETDLKRREADIKRREEALRNA) forms a coiled coil. A run of 4 helical transmembrane segments spans residues 132-152 (SWLGIVLCLSWNFIAVIVCWI), 159-179 (LFFLATIYALLGIPLSYLIWY), 194-214 (FGWFFLCYLIHIGFCIIAAIA), and 239-259 (IIGIFYFVGFALFCLETLLSI). Residues 260 to 273 (GVLQRVYMYFRGNK) are Cytoplasmic-facing.

This sequence belongs to the SCAMP family.

The protein localises to the cell membrane. Its subcellular location is the cytoplasmic vesicle. It localises to the secretory vesicle membrane. In terms of biological role, probably involved in membrane trafficking. The sequence is that of Secretory carrier-associated membrane protein 6 (SCAMP6) from Oryza sativa subsp. japonica (Rice).